The primary structure comprises 717 residues: UvrABC system protein C (717 aa).

One can recognise a GIY-YIG domain in the interval 16 to 95 (DAPGVYRFHD…IKEYDPRFNV (80 aa)). One can recognise a UVR domain in the interval 208–243 (DTLIRKLDREMRQASEELEFERAARLRDDLEALRRA). Disordered stretches follow at residues 517-555 (TAAGNGLADTAAGEPEADVAVTPQEAERTGIDPETGRPR) and 696-717 (HAALAAGGGTGESRDNAEGESQ). Composition is skewed to basic and acidic residues over residues 541–553 (EAERTGIDPETGR) and 707–717 (ESRDNAEGESQ).

This sequence belongs to the UvrC family. As to quaternary structure, interacts with UvrB in an incision complex.

The protein resides in the cytoplasm. Its function is as follows. The UvrABC repair system catalyzes the recognition and processing of DNA lesions. UvrC both incises the 5' and 3' sides of the lesion. The N-terminal half is responsible for the 3' incision and the C-terminal half is responsible for the 5' incision. The sequence is that of UvrABC system protein C from Saccharopolyspora erythraea (strain ATCC 11635 / DSM 40517 / JCM 4748 / NBRC 13426 / NCIMB 8594 / NRRL 2338).